Here is a 290-residue protein sequence, read N- to C-terminus: Pirin (290 aa).

The Fe cation site is built by H56, H58, H101, and E103.

This sequence belongs to the pirin family. May interact with NF1/CTF1. Interacts with BCL3. Identified in a complex comprised of PIR, BLC3, NFKB1 and target DNA. It depends on Fe cation as a cofactor. Highly expressed in a subset of melanomas. Detected at very low levels in most tissues (at protein level). Expressed in all tissues, with highest level of expression in heart and liver.

It localises to the nucleus. Its subcellular location is the cytoplasm. The catalysed reaction is quercetin + O2 = 2-(3,4-dihydroxybenzoyloxy)-4,6-dihydroxybenzoate + CO. It participates in flavonoid metabolism; quercetin degradation. Inhibited by kojic acid, sodium diethyldithiocarbamate and 1,10-phenanthroline monohydrochloride. Its function is as follows. Transcriptional coregulator of NF-kappa-B which facilitates binding of NF-kappa-B proteins to target kappa-B genes in a redox-state-dependent manner. May be required for efficient terminal myeloid maturation of hematopoietic cells. Has quercetin 2,3-dioxygenase activity (in vitro). In Homo sapiens (Human), this protein is Pirin (PIR).